Consider the following 269-residue polypeptide: Proline-rich protein 7 (269 aa).

The Extracellular segment spans residues 1–9 (MVMSQGTYT). The tract at residues 1-44 (MVMSQGTYTFLTCFAGFWLIWGLIVLLCCFCSFLRRRLKRRQEE) is required for interaction with NMDA receptors. The required for membrane localization stretch occupies residues 2–39 (VMSQGTYTFLTCFAGFWLIWGLIVLLCCFCSFLRRRLK). Residues 10 to 30 (FLTCFAGFWLIWGLIVLLCCF) traverse the membrane as a helical; Signal-anchor for type III membrane protein segment. Topologically, residues 31–269 (CSFLRRRLKR…IPLFGRTTAV (239 aa)) are cytoplasmic. A Phosphoserine modification is found at serine 64. 2 disordered regions span residues 64–83 (SLAG…RSRL) and 98–128 (LLHH…LSVP). The span at 108 to 117 (AHPHPHHHAL) shows a compositional bias: basic residues. Pro residues predominate over residues 118–128 (PHPPPSHLSVP). The required for internalization stretch occupies residues 146 to 166 (PCYEEAVLMAEPPPPYSEVLT). Residues 146–269 (PCYEEAVLMA…IPLFGRTTAV (124 aa)) are required for apoptosis induction. A PDZ-binding motif is present at residues 267–269 (TAV).

Forms a complex with NMDA receptor zeta subunit GRIN1 and epsilon subunit GRIN2B. Interacts with GRIN2B. Interacts with GRIN1; the interaction is reduced upon NMDA receptor activity. Found in a postsynaptic membrane complex with DLG4 and GRIN1. Interacts with DLG4 (via PDZ3 domain and to lesser degree via PDZ2 domain). Interacts with FBXW7. Found in a complex with JUN and FBXW7. Interacts with JUN and FBXW7; the interaction inhibits ubiquitination-mediated JUN degradation promoting its phosphorylation and transcriptional activity. Interacts with SRC. Palmitoylated. Post-translationally, tyrosine phosphorylated, possibly by SRC. Expressed in brain. Expressed in the cerebral cortex and especially in hippocampal neural cells (at protein level).

Its subcellular location is the cell membrane. The protein resides in the postsynaptic cell membrane. The protein localises to the postsynaptic density membrane. It is found in the cytoplasm. It localises to the perinuclear region. Its subcellular location is the synapse. The protein resides in the cell projection. The protein localises to the dendrite. It is found in the nucleus. Functionally, acts as a synapse-to-nucleus messenger to promote NMDA receptor-mediated excitotoxicity in neurons in a JUN-dependent manner. Inhibits ubiquitination-mediated degradation and promotes phosphorylation and transcriptional activity of transcription factor JUN. Might play a redundant role in the regulation of T cell receptor signaling. Might promote apoptosis in T cells. This Rattus norvegicus (Rat) protein is Proline-rich protein 7 (Prr7).